A 788-amino-acid chain; its full sequence is IQ motif and ubiquitin-like domain-containing protein (788 aa).

A disordered region spans residues 1–89 (MSDPEEERVA…SLGSASGSQD (89 aa)). Residues 7 to 20 (ERVADSTAHYEEAG) show a composition bias toward basic and acidic residues. Residues 31–54 (EAEGSDVMPEQDDEVQELTTESEE) are compositionally biased toward acidic residues. The span at 68-78 (KSDDSKPREEV) shows a compositional bias: basic and acidic residues. Polar residues predominate over residues 80–89 (SLGSASGSQD). Residues 127–203 (ATVKIVLIPA…VQVEVFSTLP (77 aa)) enclose the Ubiquitin-like domain. An IQ domain is found at 334–363 (RLHAVIVIQTSYRRWHAKRYVESLRKQKKL).

As to quaternary structure, component of the axonemal radial spoke 1 (RS1) complex, at least composed of spoke head proteins RSPH1, RSPH3B, RSPH9 and the cilia-specific component RSPH4A or sperm-specific component RSPH6A, spoke stalk proteins RSPH14, DNAJB13, DYDC1, ROPN1L and NME5, and the anchor protein IQUB. Does not appear to be part of radial spoke complexes 2 or 3 (RS2 or RS3). Interacts with CALM1. Interacts with DNAJB13. Interacts with DYNLL2. Interacts with NME5. Interacts with RSPH3. Interacts with RSPH9. Interacts with ZMYND10. Interacts with calmodulin; the interaction occurs in conditions of low but not high calcium. As to expression, expressed in the flagellum of sperm cells and cilia of tracheal epithelial cells (at protein level). High expression in testis, also present in brain and lung.

Its subcellular location is the cytoplasm. It is found in the cytoskeleton. The protein localises to the flagellum axoneme. The protein resides in the cell projection. It localises to the cilium. Functionally, anchors the radial spoke 1 (RS1) complex to the A microtubule of outer doublet microtubules in axonemes. The triple radial spokes (RS1, RS2 and RS3) are required to modulate beating of the sperm flagellum. May play a role in inhibiting signaling via MAPK1/ERK2 and MAPK3/ERK1. Additionally, may play a role in the functioning of cilia. Not required for the functioning of tracheal or ependymal cilia. In Mus musculus (Mouse), this protein is IQ motif and ubiquitin-like domain-containing protein (Iqub).